Reading from the N-terminus, the 267-residue chain is 22 kDa alpha-zein 14 (267 aa).

An N-terminal signal peptide occupies residues 1-21; sequence MATKILSLLALLALFASATNA.

The protein belongs to the zein family.

Zeins are major seed storage proteins. This chain is 22 kDa alpha-zein 14, found in Zea mays (Maize).